The primary structure comprises 299 residues: Cysteine synthase B (299 aa).

Residue Lys45 is modified to N6-(pyridoxal phosphate)lysine. Residues Asn75, 178–182, and Ser259 contribute to the pyridoxal 5'-phosphate site; that span reads GTTGT.

This sequence belongs to the cysteine synthase/cystathionine beta-synthase family. Pyridoxal 5'-phosphate is required as a cofactor.

It catalyses the reaction O-acetyl-L-serine + hydrogen sulfide = L-cysteine + acetate. It participates in amino-acid biosynthesis; L-cysteine biosynthesis; L-cysteine from L-serine: step 2/2. The protein is Cysteine synthase B (cysM) of Pseudomonas aeruginosa (strain ATCC 15692 / DSM 22644 / CIP 104116 / JCM 14847 / LMG 12228 / 1C / PRS 101 / PAO1).